A 259-amino-acid chain; its full sequence is Probable dihydroorotate dehydrogenase B (NAD(+)), electron transfer subunit (259 aa).

Residues Met-1–Leu-89 form the FAD-binding FR-type domain. [2Fe-2S] cluster-binding residues include Cys-211, Cys-216, Cys-219, and Cys-229.

Belongs to the PyrK family. Heterotetramer of 2 PyrK and 2 PyrD type B subunits. It depends on [2Fe-2S] cluster as a cofactor. FAD serves as cofactor.

It participates in pyrimidine metabolism; UMP biosynthesis via de novo pathway; orotate from (S)-dihydroorotate (NAD(+) route): step 1/1. In terms of biological role, responsible for channeling the electrons from the oxidation of dihydroorotate from the FMN redox center in the PyrD type B subunit to the ultimate electron acceptor NAD(+). In Methanosarcina mazei (strain ATCC BAA-159 / DSM 3647 / Goe1 / Go1 / JCM 11833 / OCM 88) (Methanosarcina frisia), this protein is Probable dihydroorotate dehydrogenase B (NAD(+)), electron transfer subunit.